The primary structure comprises 309 residues: Aspartate carbamoyltransferase catalytic subunit (309 aa).

2 residues coordinate carbamoyl phosphate: arginine 59 and threonine 60. Lysine 87 contacts L-aspartate. Residues arginine 109, histidine 139, and glutamine 142 each coordinate carbamoyl phosphate. The L-aspartate site is built by arginine 172 and arginine 224. Carbamoyl phosphate-binding residues include alanine 265 and proline 266.

Belongs to the aspartate/ornithine carbamoyltransferase superfamily. ATCase family. Heterododecamer (2C3:3R2) of six catalytic PyrB chains organized as two trimers (C3), and six regulatory PyrI chains organized as three dimers (R2).

The enzyme catalyses carbamoyl phosphate + L-aspartate = N-carbamoyl-L-aspartate + phosphate + H(+). It participates in pyrimidine metabolism; UMP biosynthesis via de novo pathway; (S)-dihydroorotate from bicarbonate: step 2/3. Its function is as follows. Catalyzes the condensation of carbamoyl phosphate and aspartate to form carbamoyl aspartate and inorganic phosphate, the committed step in the de novo pyrimidine nucleotide biosynthesis pathway. This Streptococcus uberis (strain ATCC BAA-854 / 0140J) protein is Aspartate carbamoyltransferase catalytic subunit.